A 953-amino-acid chain; its full sequence is Anion exchange protein 4 (953 aa).

A disordered region spans residues 20-41; that stretch reads SEQLDGDLGPGSGLDGPSDIDN. Transmembrane regions (helical) follow at residues 385–405, 413–433, 470–490, and 501–521; these read AVLYIYLATVTNAITFGGLLG, GVLESFLGTAVAGATFCLMAG, VGIWVATFCLALVATEASLLV, and FCALISLIFIYDAVGKMLNLI. The tract at residues 385 to 953 is membrane (anion exchange); that stretch reads AVLYIYLATV…KAPEINISVN (569 aa). 2 N-linked (GlcNAc...) asparagine glycosylation sites follow: asparagine 546 and asparagine 570. 7 consecutive transmembrane segments (helical) span residues 594-614, 635-655, 682-702, 728-748, 785-805, 807-827, and 869-889; these read VPDIAFFSLLLFFTSFLCAIA, FSSVLAILLGCGLDAFLGLAT, PWWLSVAAALPALLLSILIFM, LFCVAVLMLFTSALGLPWYVS, GLVVFILTGVSIFLAPVLKFI, MPVLYGIFLYMGVAALSSMQF, and LWVIKSTPAAIVFPLMLLGLV. Over residues 916 to 927 the composition is skewed to basic and acidic residues; the sequence is KTIPENRPEPEH. The segment at 916–938 is disordered; it reads KTIPENRPEPEHLFSGNDSENSE. 2 N-linked (GlcNAc...) asparagine glycosylation sites follow: asparagine 932 and asparagine 949.

Belongs to the anion exchanger (TC 2.A.31) family. As to expression, expressed in kidney and gastrointestinal tract. In kidney, it is highly expressed in the cortex, expressed at intermediate level in the outer medulla and not expressed in the inner medulla. It is expressed in the cecum, while it is absent in other segments of gastrointestinal tract. Highly expressed in the cortical collecting duct (CCD). Expressed in both alpha-intercalated cells and beta-intercalated cells in the CCD (at protein level).

It localises to the basolateral cell membrane. The enzyme catalyses 2 hydrogencarbonate(out) + chloride(in) + Na(+)(out) = 2 hydrogencarbonate(in) + chloride(out) + Na(+)(in). The catalysed reaction is K(+)(in) + 2 hydrogencarbonate(in) + chloride(out) = K(+)(out) + 2 hydrogencarbonate(out) + chloride(in). It catalyses the reaction Li(+)(in) + 2 hydrogencarbonate(in) + chloride(out) = Li(+)(out) + 2 hydrogencarbonate(out) + chloride(in). It carries out the reaction Rb(+)(in) + 2 hydrogencarbonate(in) + chloride(out) = Rb(+)(out) + 2 hydrogencarbonate(out) + chloride(in). The enzyme catalyses Cs(+)(in) + 2 hydrogencarbonate(in) + chloride(out) = Cs(+)(out) + 2 hydrogencarbonate(out) + chloride(in). Its activity is regulated as follows. 4,4'-diisothiocyanatodihydrostilbene-2,2'- disulfonic acid (H2DIDS) potently inhibits chloride/hydrogencarbonate antiporter activity with 50% inhibition at about 5 uM. Completely inhibits chloride/hydrogencarbonate antiporter activity at 200 uM of 4,4'-diisothiocyano-trans-stilbene-2,2'-disulfonic acid (DIDS). In terms of biological role, electroneutral Cl(-)/HCO3(-) antiporter that favors chloride ion entry and efflux of hydrogencarbonate and sodium ion across the basolateral membrane and may participate in salivary secretion. Also mediates Cl(-)/HCO3(-) exchange activity in the presence of K(+) as well as Cs(+), Li(+), and Rb(+). Does not contribute to Cl(-)/HCO3(-) exchanger in the apical membrane of the upper villous epithelium. In Rattus norvegicus (Rat), this protein is Anion exchange protein 4.